Consider the following 330-residue polypeptide: Diacylglycerol acyltransferase/mycolyltransferase Ag85A (330 aa).

An N-terminal signal peptide occupies residues Met1–Ala42. A substrate-binding site is contributed by Leu84–Arg85. Residues Phe100 to Val110 form a fibronectin-binding region. Cysteines 129 and 134 form a disulfide. Substrate-binding residues include Ser168 and Asp196. Catalysis depends on Ser168, which acts as the Nucleophile. The active site involves Glu272. Residues Leu274–Thr277, Lys281, and His304–Trp306 each bind substrate. His304 is an active-site residue.

It belongs to the mycobacterial A85 antigen family. In terms of assembly, homodimer.

Its subcellular location is the secreted. It is found in the cell wall. The protein localises to the cytoplasm. It carries out the reaction an acyl-CoA + a 1,2-diacyl-sn-glycerol = a triacyl-sn-glycerol + CoA. The enzyme catalyses 2 alpha,alpha'-trehalose 6-mycolate = alpha,alpha'-trehalose 6,6'-bismycolate + alpha,alpha-trehalose. In terms of biological role, the antigen 85 proteins (FbpA, FbpB, FbpC) are responsible for the high affinity of mycobacteria for fibronectin, a large adhesive glycoprotein, which facilitates the attachment of M.tuberculosis to murine alveolar macrophages (AMs). They also help to maintain the integrity of the cell wall by catalyzing the transfer of mycolic acids to cell wall arabinogalactan, and through the synthesis of alpha,alpha-trehalose dimycolate (TDM, cord factor). They catalyze the transfer of a mycoloyl residue from one molecule of alpha,alpha-trehalose monomycolate (TMM) to another TMM, leading to the formation of TDM. FbpA mediates triacylglycerol (TAG) formation with long-chain acyl-CoA as the acyl donor and 1,2-dipalmitoyl-sn-glycerol (1,2-dipalmitin) as the acyl acceptor. It has a preference for C26:0-CoA over C18:1-CoA. This chain is Diacylglycerol acyltransferase/mycolyltransferase Ag85A (fbpA), found in Mycobacterium leprae (strain TN).